Consider the following 37-residue polypeptide: Cytochrome b6-f complex subunit 5 (37 aa).

Residues 5 to 25 (LLSGIILGLIPITICGLFFTA) traverse the membrane as a helical segment.

This sequence belongs to the PetG family. As to quaternary structure, the 4 large subunits of the cytochrome b6-f complex are cytochrome b6, subunit IV (17 kDa polypeptide, PetD), cytochrome f and the Rieske protein, while the 4 small subunits are PetG, PetL, PetM and PetN. The complex functions as a dimer.

The protein localises to the plastid. It is found in the chloroplast thylakoid membrane. Component of the cytochrome b6-f complex, which mediates electron transfer between photosystem II (PSII) and photosystem I (PSI), cyclic electron flow around PSI, and state transitions. PetG is required for either the stability or assembly of the cytochrome b6-f complex. This is Cytochrome b6-f complex subunit 5 from Euglena gracilis.